The following is a 250-amino-acid chain: Electron transport regulator A (250 aa).

The region spanning 164-237 (KNAEERLAAF…GKYIIIVDHH (74 aa)) is the HTH crp-type domain. The segment at residues 197 to 216 (RGDIGNYLGLTVETISRLLG) is a DNA-binding region (H-T-H motif).

Monomer.

In terms of biological role, regulates anaerobic growth on fumarate, nitrite, Fe(3+), TMAO, DMSO, thiosulfate and sulfite, but not on nitrate nor Mn(4+). This is Electron transport regulator A (etrA) from Shewanella oneidensis (strain ATCC 700550 / JCM 31522 / CIP 106686 / LMG 19005 / NCIMB 14063 / MR-1).